We begin with the raw amino-acid sequence, 334 residues long: Cytochrome c551 peroxidase (334 aa).

The first 26 residues, 1 to 26, serve as a signal peptide directing secretion; sequence MIKRTLTVSLLSLSLGAMFASAGVMA. Heme c is bound by residues Cys65, Cys68, His69, Cys209, Cys212, His213, His270, and Met284. Positions 315–334 are disordered; that stretch reads FKLPILPPSNNDTPRSQPYE. Positions 322 to 334 are enriched in polar residues; the sequence is PSNNDTPRSQPYE.

Binds 2 heme c groups covalently per subunit.

The protein localises to the periplasm. The enzyme catalyses 2 Fe(II)-[cytochrome c] + H2O2 + 2 H(+) = 2 Fe(III)-[cytochrome c] + 2 H2O. The protein is Cytochrome c551 peroxidase (ccp) of Nitrosomonas europaea (strain ATCC 19718 / CIP 103999 / KCTC 2705 / NBRC 14298).